The sequence spans 208 residues: Ion-translocating oxidoreductase complex subunit G (208 aa).

Residues 9 to 29 traverse the membrane as a helical segment; that stretch reads GVTLAVFAALTTGLTAMVNAL. T174 bears the FMN phosphoryl threonine mark.

Belongs to the RnfG family. As to quaternary structure, the complex is composed of six subunits: RnfA, RnfB, RnfC, RnfD, RnfE and RnfG. It depends on FMN as a cofactor.

It localises to the cell inner membrane. Its function is as follows. Part of a membrane-bound complex that couples electron transfer with translocation of ions across the membrane. The protein is Ion-translocating oxidoreductase complex subunit G of Cronobacter sakazakii (strain ATCC BAA-894) (Enterobacter sakazakii).